A 192-amino-acid polypeptide reads, in one-letter code: Crossover junction endodeoxyribonuclease RuvC (192 aa).

Residues aspartate 8, glutamate 67, and aspartate 139 contribute to the active site. Mg(2+) is bound by residues aspartate 8, glutamate 67, and aspartate 139.

It belongs to the RuvC family. In terms of assembly, homodimer which binds Holliday junction (HJ) DNA. The HJ becomes 2-fold symmetrical on binding to RuvC with unstacked arms; it has a different conformation from HJ DNA in complex with RuvA. In the full resolvosome a probable DNA-RuvA(4)-RuvB(12)-RuvC(2) complex forms which resolves the HJ. Mg(2+) is required as a cofactor.

It localises to the cytoplasm. It carries out the reaction Endonucleolytic cleavage at a junction such as a reciprocal single-stranded crossover between two homologous DNA duplexes (Holliday junction).. The RuvA-RuvB-RuvC complex processes Holliday junction (HJ) DNA during genetic recombination and DNA repair. Endonuclease that resolves HJ intermediates. Cleaves cruciform DNA by making single-stranded nicks across the HJ at symmetrical positions within the homologous arms, yielding a 5'-phosphate and a 3'-hydroxyl group; requires a central core of homology in the junction. The consensus cleavage sequence is 5'-(A/T)TT(C/G)-3'. Cleavage occurs on the 3'-side of the TT dinucleotide at the point of strand exchange. HJ branch migration catalyzed by RuvA-RuvB allows RuvC to scan DNA until it finds its consensus sequence, where it cleaves and resolves the cruciform DNA. The protein is Crossover junction endodeoxyribonuclease RuvC of Actinobacillus pleuropneumoniae serotype 5b (strain L20).